We begin with the raw amino-acid sequence, 323 residues long: AA9 family lytic polysaccharide monooxygenase A (323 aa).

The first 19 residues, 1 to 19 (MKSFISLLGLSFLTCHASA), serve as a signal peptide directing secretion. Residues H20 and H90 each contribute to the Cu(2+) site. C59 and C175 are oxidised to a cystine. Positions 161 and 170 each coordinate O2. Y172 lines the Cu(2+) pocket. N-linked (GlcNAc...) asparagine glycosylation occurs at N215. Residues 287 to 323 (AVVQKFGQCGGQGWTGGTTCVAGSTCTATNAYYSQCL) form the CBM1 domain.

It belongs to the polysaccharide monooxygenase AA9 family. Requires Cu(2+) as cofactor.

It localises to the secreted. It catalyses the reaction [(1-&gt;4)-beta-D-glucosyl]n+m + reduced acceptor + O2 = 4-dehydro-beta-D-glucosyl-[(1-&gt;4)-beta-D-glucosyl]n-1 + [(1-&gt;4)-beta-D-glucosyl]m + acceptor + H2O.. Functionally, lytic polysaccharide monooxygenase (LPMO) that depolymerizes crystalline and amorphous polysaccharides via the oxidation of scissile alpha- or beta-(1-4)-glycosidic bonds, yielding C1 and C4 oxidation products. Catalysis by LPMOs requires the reduction of the active-site copper from Cu(II) to Cu(I) by a reducing agent and H(2)O(2) or O(2) as a cosubstrate. The protein is AA9 family lytic polysaccharide monooxygenase A of Botryotinia fuckeliana (strain B05.10) (Noble rot fungus).